The following is a 467-amino-acid chain: Uronate isomerase (467 aa).

Belongs to the metallo-dependent hydrolases superfamily. Uronate isomerase family.

It catalyses the reaction D-glucuronate = D-fructuronate. The enzyme catalyses aldehydo-D-galacturonate = keto-D-tagaturonate. The protein operates within carbohydrate metabolism; pentose and glucuronate interconversion. This Geobacillus thermodenitrificans (strain NG80-2) protein is Uronate isomerase.